We begin with the raw amino-acid sequence, 213 residues long: Citrate synthase, mitochondrial (213 aa).

The active site involves His74. An N6-acetyllysine; alternate mark is found at Lys94 and Lys100. Lys94 and Lys100 each carry N6-succinyllysine; alternate. The active site involves His120. Arg129 contacts oxaloacetate. Lys148 is modified (N6-acetyllysine; alternate). At Lys148 the chain carries N6-succinyllysine; alternate. Lys155 is subject to N6-acetyllysine. The residue at position 166 (Lys166) is an N6-acetyllysine; alternate. N6-succinyllysine; alternate is present on Lys166. Residue Lys168 is modified to N6,N6,N6-trimethyllysine. Asp175 is an active-site residue. Residue Arg201 coordinates oxaloacetate.

This sequence belongs to the citrate synthase family. In terms of assembly, homodimer. In terms of processing, in response to mitochondrial stress, the precursor protein is ubiquitinated by the SIFI complex in the cytoplasm before mitochondrial import, leading to its degradation. Within the SIFI complex, UBR4 initiates ubiquitin chain that are further elongated or branched by KCMF1.

It is found in the mitochondrion matrix. The catalysed reaction is oxaloacetate + acetyl-CoA + H2O = citrate + CoA + H(+). The protein operates within carbohydrate metabolism; tricarboxylic acid cycle; isocitrate from oxaloacetate: step 1/2. Key enzyme of the Krebs tricarboxylic acid cycle which catalyzes the synthesis of citrate from acetyl coenzyme A and oxaloacetate. This Mesocricetus auratus (Golden hamster) protein is Citrate synthase, mitochondrial.